The following is a 101-amino-acid chain: MAKKSKIAKNEQRKAIVARYAERRAELKAIIRNPNTSDEDRLDAQFELNRQPRDAAQVRVRNRDAHDGRPRGYLRKFGLSRVRMREMAHRGELPGVRKSSW.

This sequence belongs to the universal ribosomal protein uS14 family. In terms of assembly, part of the 30S ribosomal subunit. Contacts proteins S3 and S10.

In terms of biological role, binds 16S rRNA, required for the assembly of 30S particles and may also be responsible for determining the conformation of the 16S rRNA at the A site. This is Small ribosomal subunit protein uS14 from Corynebacterium efficiens (strain DSM 44549 / YS-314 / AJ 12310 / JCM 11189 / NBRC 100395).